A 600-amino-acid polypeptide reads, in one-letter code: Ligand-dependent nuclear receptor corepressor-like protein (600 aa).

3 disordered regions span residues 1–24, 102–122, and 495–519; these read MEKG…QCRS, SVIG…GQSN, and DGTS…KRGR. The span at 104 to 122 shows a compositional bias: polar residues; that stretch reads IGSSQSTPTEELSSQGQSN. In terms of domain architecture, HTH psq-type spans 514–566; sequence RKKRGRYRQYDHEIMEEAIAMVMSGKMSVSKAQGIYGVPHSTLEYKVKERSGT. The segment at residues 542 to 562 is a DNA-binding region (H-T-H motif); sequence VSKAQGIYGVPHSTLEYKVKE. The tract at residues 581–600 is disordered; it reads GLFNMTDSGTGSCKTSSKPV. Positions 583–600 are enriched in polar residues; that stretch reads FNMTDSGTGSCKTSSKPV.

The protein localises to the nucleus. May act as transcription activator that binds DNA elements with the sequence 5'-CCCTATCGATCGATCTCTACCT-3'. This chain is Ligand-dependent nuclear receptor corepressor-like protein (LCORL), found in Gallus gallus (Chicken).